We begin with the raw amino-acid sequence, 294 residues long: Elongation factor Ts (294 aa).

The tract at residues 81–84 (TDFV) is involved in Mg(2+) ion dislocation from EF-Tu.

It belongs to the EF-Ts family.

The protein resides in the cytoplasm. Its function is as follows. Associates with the EF-Tu.GDP complex and induces the exchange of GDP to GTP. It remains bound to the aminoacyl-tRNA.EF-Tu.GTP complex up to the GTP hydrolysis stage on the ribosome. The polypeptide is Elongation factor Ts (Hydrogenovibrio crunogenus (strain DSM 25203 / XCL-2) (Thiomicrospira crunogena)).